A 609-amino-acid polypeptide reads, in one-letter code: MALSDHSRQLLDTLNKQRQSGFLCDCTILIGDFHFKAHRNVLASFSDYFRAYFKDSLDSIVLLDQIKVTPSGFQTLLDFIYSGNLNYDSCNLEEINLAAQHLRLEDVVATCRTKIESLVGLTKPSVTHLAPTSSSLDENEYFTSLYPREAMKVDAIEISYSQSKVKKGIKGKKSQKIKRWKRPLRSHQHVKKKSSKCQLSSPKTPAVLSLDAKELELMAADHVAKDNTCLLSFTSEIDCEIFLSQNISLETATMTQQKPAKLQQDCAMKEHCISNIADITNVCTMEGCDKELDPKYSKNKPVCNTCGKVFSEASSLRRHMRIHKGVKPYVCHLCAKAFTQCNQLKTHVRTHTGEKPYQCKKCDKGFAQKCQLVFHSRMHHGEEKPYKCDVCNLQFATSSNLKIHARKHSGEKPYVCDRCGQRFAQASTLTYHVRRHTGEKPYVCDTCGKAFAVSSSLITHARKHTGEKPYICGVCRKSFISSGELNKHFRSHTGERPFVCEVCGNSYTDVKNLKKHKLKMHKGSEEAIEMKSAENSSSSEDSTTKSPEPESLELKPSDLFLPLTLHISPDDPQMLLPVSDNRGLSSETLLRASVPSYSEPQFIFLQQMY.

In terms of domain architecture, BTB spans Cys24 to Ser89. Short sequence motifs (nuclear localization signal) lie at residues Lys172–Gln188 and Gln257–Leu262. C2H2-type zinc fingers lie at residues Pro301–His323, Tyr329–His351, Tyr357–His380, Tyr386–His408, Tyr414–His436, Tyr442–His464, Tyr470–His492, and Phe498–His521. A disordered region spans residues Ile528–Glu553. The segment covering Ala533–Ser546 has biased composition (low complexity).

It localises to the nucleus. In Xenopus laevis (African clawed frog), this protein is Myoneurin (mynn).